The sequence spans 415 residues: L-cysteine:1D-myo-inositol 2-amino-2-deoxy-alpha-D-glucopyranoside ligase (415 aa).

The interval 1–20 (MQSWSETAVPSVPGQGPPLR) is disordered. A Zn(2+)-binding site is contributed by C43. L-cysteinyl-5'-AMP is bound by residues 43–46 (CGIT), T58, and 81–83 (NVT). The 'HIGH' region motif lies at 45-55 (ITPYDATHLGH). The 'ERGGDP' region signature appears at 187 to 192 (ERGGDP). W227 serves as a coordination point for L-cysteinyl-5'-AMP. C231 is a binding site for Zn(2+). Position 249-251 (249-251 (GSD)) interacts with L-cysteinyl-5'-AMP. H256 lines the Zn(2+) pocket. I283 is an L-cysteinyl-5'-AMP binding site. The 'KMSKS' region signature appears at 289 to 293 (KMSKS).

It belongs to the class-I aminoacyl-tRNA synthetase family. MshC subfamily. In terms of assembly, monomer. It depends on Zn(2+) as a cofactor.

It catalyses the reaction 1D-myo-inositol 2-amino-2-deoxy-alpha-D-glucopyranoside + L-cysteine + ATP = 1D-myo-inositol 2-(L-cysteinylamino)-2-deoxy-alpha-D-glucopyranoside + AMP + diphosphate + H(+). In terms of biological role, catalyzes the ATP-dependent condensation of GlcN-Ins and L-cysteine to form L-Cys-GlcN-Ins. This chain is L-cysteine:1D-myo-inositol 2-amino-2-deoxy-alpha-D-glucopyranoside ligase, found in Rhodococcus jostii (strain RHA1).